Consider the following 379-residue polypeptide: Queuine tRNA-ribosyltransferase (379 aa).

Residue D89 is the Proton acceptor of the active site. Substrate is bound by residues 89–93 (DSGGF), D143, Q187, and G214. An RNA binding region spans residues 245 to 251 (GVGKPED). Catalysis depends on D264, which acts as the Nucleophile. An RNA binding; important for wobble base 34 recognition region spans residues 269 to 273 (TRNAR). Residues C302, C304, C307, and H333 each coordinate Zn(2+).

Belongs to the queuine tRNA-ribosyltransferase family. In terms of assembly, homodimer. Within each dimer, one monomer is responsible for RNA recognition and catalysis, while the other monomer binds to the replacement base PreQ1. It depends on Zn(2+) as a cofactor.

The catalysed reaction is 7-aminomethyl-7-carbaguanine + guanosine(34) in tRNA = 7-aminomethyl-7-carbaguanosine(34) in tRNA + guanine. It functions in the pathway tRNA modification; tRNA-queuosine biosynthesis. Functionally, catalyzes the base-exchange of a guanine (G) residue with the queuine precursor 7-aminomethyl-7-deazaguanine (PreQ1) at position 34 (anticodon wobble position) in tRNAs with GU(N) anticodons (tRNA-Asp, -Asn, -His and -Tyr). Catalysis occurs through a double-displacement mechanism. The nucleophile active site attacks the C1' of nucleotide 34 to detach the guanine base from the RNA, forming a covalent enzyme-RNA intermediate. The proton acceptor active site deprotonates the incoming PreQ1, allowing a nucleophilic attack on the C1' of the ribose to form the product. After dissociation, two additional enzymatic reactions on the tRNA convert PreQ1 to queuine (Q), resulting in the hypermodified nucleoside queuosine (7-(((4,5-cis-dihydroxy-2-cyclopenten-1-yl)amino)methyl)-7-deazaguanosine). The polypeptide is Queuine tRNA-ribosyltransferase (Edwardsiella ictaluri (strain 93-146)).